A 587-amino-acid chain; its full sequence is Pectinesterase 2 (587 aa).

The N-terminal stretch at 1 to 40 (MAPIKEFISKFSDFKNNKKLILSSAAIALLLLASIVGIAA) is a signal peptide. N-linked (GlcNAc...) asparagine glycosylation is found at Asn-99 and Asn-218. Substrate contacts are provided by Thr-351 and Gln-381. The active-site Proton donor is Asp-404. Cysteines 418 and 438 form a disulfide. Catalysis depends on Asp-425, which acts as the Nucleophile. Substrate-binding residues include Arg-493 and Trp-495.

The protein in the N-terminal section; belongs to the PMEI family. It in the C-terminal section; belongs to the pectinesterase family. Expressed in flower buds.

The protein localises to the secreted. Its subcellular location is the cell wall. It carries out the reaction [(1-&gt;4)-alpha-D-galacturonosyl methyl ester](n) + n H2O = [(1-&gt;4)-alpha-D-galacturonosyl](n) + n methanol + n H(+). It participates in glycan metabolism; pectin degradation; 2-dehydro-3-deoxy-D-gluconate from pectin: step 1/5. Functionally, acts in the modification of cell walls via demethylesterification of cell wall pectin. The chain is Pectinesterase 2 (PME2) from Arabidopsis thaliana (Mouse-ear cress).